Reading from the N-terminus, the 585-residue chain is Regulator of gene activity (585 aa).

Over residues 42–56 (FQTDFANSYPGTANY) the composition is skewed to polar residues. Disordered regions lie at residues 42-93 (FQTD…GNRN), 148-191 (GGGG…PGSK), and 349-394 (GVGG…KVTN). Residues 58–71 (QAPQQQQQQQQQPQ) are compositionally biased toward low complexity. A compositionally biased stretch (polar residues) spans 166-184 (PSLTNARGQNDQTLPQSNP). The span at 349–367 (GVGGGLGSGSGSSGSGAGG) shows a compositional bias: gly residues. The span at 372–388 (DNSSNDKLVKSGVQTSP) shows a compositional bias: polar residues.

The protein belongs to the CNOT2/3/5 family. As to quaternary structure, component of the CCR4-NOT complex composed of at least Pop2/Caf1-55, Ccr4, Not1, Rga/Not2, and Not3. In terms of tissue distribution, expressed in heterogeneous levels between adjacent germline stem cells (at protein level).

The protein localises to the cytoplasm. In terms of biological role, component of the CCR4-NOT complex which is one of the major cellular mRNA deadenylases and is linked to various cellular processes including bulk mRNA degradation, miRNA-mediated repression, translational repression during translational initiation and general transcription regulation. Additional complex functions may be a consequence of its influence on mRNA expression. Essential for viability. Acts as a suppressor of position effect variegation (PEV) at the white locus and regulates the expression of several unrelated genes. Plays a role in germline stem cell differentiation in the ovaries. In Drosophila melanogaster (Fruit fly), this protein is Regulator of gene activity.